The sequence spans 348 residues: Guanine nucleotide-binding protein alpha-13 subunit (348 aa).

The N-myristoyl glycine moiety is linked to residue glycine 2. The S-palmitoyl cysteine moiety is linked to residue cysteine 3. A G-alpha domain is found at 34–348 (SHIRLLLLGS…VFKDIAKRKK (315 aa)). The segment at 37–50 (RLLLLGSAESGKTT) is G1 motif. GTP-binding positions include 42-49 (GSAESGKT), 176-182 (IMAYVPT), 201-205 (DIGGQ), 270-273 (NEID), and alanine 326. The interval 174 to 182 (DLIMAYVPT) is G2 motif. Threonine 182 lines the Mg(2+) pocket. Positions 197 to 206 (FQLFDIGGQK) are G3 motif. Residues 266–273 (YLFLNEID) are G4 motif. The G5 motif stretch occupies residues 324 to 329 (CIAIDT).

Belongs to the G-alpha family. G proteins are composed of 3 units; alpha, beta and gamma. The alpha chain contains the guanine nucleotide binding site.

Its function is as follows. Guanine nucleotide-binding proteins (G proteins) are involved as modulators or transducers in various transmembrane signaling systems. The sequence is that of Guanine nucleotide-binding protein alpha-13 subunit (gpa-13) from Caenorhabditis elegans.